The following is a 281-amino-acid chain: 2,3,4,5-tetrahydropyridine-2,6-dicarboxylate N-succinyltransferase (281 aa).

It belongs to the transferase hexapeptide repeat family.

The protein resides in the cytoplasm. The enzyme catalyses (S)-2,3,4,5-tetrahydrodipicolinate + succinyl-CoA + H2O = (S)-2-succinylamino-6-oxoheptanedioate + CoA. Its pathway is amino-acid biosynthesis; L-lysine biosynthesis via DAP pathway; LL-2,6-diaminopimelate from (S)-tetrahydrodipicolinate (succinylase route): step 1/3. This Methylobacterium sp. (strain 4-46) protein is 2,3,4,5-tetrahydropyridine-2,6-dicarboxylate N-succinyltransferase.